Consider the following 1188-residue polypeptide: MEQPDLSSVAISKPLLKLKLLDALRQGSFPNLQDLLKKQFQPLDDPNVQQVLHLMLHYAVQVAPMAVIKEIVHHWVSTTNTTFLNIHLDLNERDSNGNTPLHIAAYQSRGDIVAFLLDQPTINDCVLNNSHLQAIEMCKNLNIAQMMQVKRSTYVAETAQEFRTAFNNRDFGHLESILSSPRNAELLDINGMDPETGDTVLHEFVKKRDVIMCRWLLEHGADPFKRDRKGKLPIELVRKVNENDTATNTKIAIDIELKKLLERATREQSVIDVTNNNLHEAPTYKGYLKKWTNFAQGYKLRWFILSSDGKLSYYIDQADTKNACRGSLNMSSCSLHLDSSEKLKFEIIGGNNGVIRWHLKGNHPIETNRWVWAIQGAIRYAKDREILLHNGPYSPSLALSHGLSSKVSNKENLHATSKRLTKSPHLSKSTLTQNDHDNDDDSTNNNNNKSNNDYDDNNNNNNNDDDDYDDDDESRPLIEPLPLISSRSQSLSEITPGPHSRKSTVSSTRAADIPSDDEGYSEDDSDDDGNSSYTMENGGENDGDEDLNAIYGPYIQKLHMLQRSISIELASLNELLQDKQQHDEYWNTVNTSIETVSEFFDKLNRLTSQREKRMIAQMTKQRDVNNVWIQSVKDLEMELVDKDEKLVALDKERKNLKKMLQKKLNNQPQVETEANEESDDANSMIKGSQESTNTLEEIVKFIEATKESDEDSDADEFFDAEEAASDKKANDSEDLTTNKETPANAKPQEEAPEDESLIVISSPQVEKKNQLLKEGSFVGYEDPVRTKLALDEDNRPKIGLWSVLKSMVGQDLTKLTLPVSFNEPTSLLQRVSEDIEYSHILDQAATFEDSSLRMLYVAAFTASMYASTTNRVSKPFNPLLGETFEYARTDGQYRFFTEQVSHHPPISATWTESPKWDFYGECNVDSSFNGRTFAVQHLGLWYITIRPDHNISVPEETYSWKKPNNTVIGILMGKPQVDNSGDVKVTNHTTGDYCMLHYKAHGWTSAGAYEVRGEVFNKDDKKLWVLGGHWNDSIYGKKVTARGGELTLDRIKTANSATGGPKLDGSKFLIWKANERPSVPFNLTSFALTLNALPPHLIPYLAPTDSRLRPDQRAMENGEYDKAAAEKHRVEVKQRAAKKEREQKGEEYRPKWFVQEEHPVTKSLYWKFNGEYWNKRKNHDFKDCADIF.

3 ANK repeats span residues 51 to 80 (VLHLMLHYAVQVAPMAVIKEIVHHWVSTTN), 96 to 125 (NGNTPLHIAAYQSRGDIVAFLLDQPTINDC), and 196 to 225 (TGDTVLHEFVKKRDVIMCRWLLEHGADPFK). Positions 330-379 (MSSCSLHLDSSEKLKFEIIGGNNGVIRWHLKGNHPIETNRWVWAIQGAIR) constitute a PH domain. Phosphoserine is present on Ser394. Disordered regions lie at residues 415 to 546 (ATSK…GDED) and 661 to 692 (QKKLNNQPQVETEANEESDDANSMIKGSQEST). Over residues 424–433 (PHLSKSTLTQ) the composition is skewed to polar residues. The segment covering 443–462 (TNNNNNKSNNDYDDNNNNNN) has biased composition (low complexity). Residues 463 to 473 (NDDDDYDDDDE) are compositionally biased toward acidic residues. A phosphoserine mark is found at Ser490 and Ser500. A compositionally biased stretch (acidic residues) spans 514-529 (PSDDEGYSEDDSDDDG). Ser678, Ser683, and Ser691 each carry phosphoserine. Phosphothreonine is present on residues Thr692 and Thr694. Ser708 and Ser712 each carry phosphoserine. An FFAT motif is present at residues 716-722 (EFFDAEE). The tract at residues 721–755 (EEAASDKKANDSEDLTTNKETPANAKPQEEAPEDE) is disordered. Residues 800–1174 (LWSVLKSMVG…YWKFNGEYWN (375 aa)) form an OSBP-related domain (ORD) region. Asp834 and Lys962 together coordinate ergosterol.

The protein belongs to the OSBP family. As to quaternary structure, interacts with NVJ1. Interacts with the AAA ATPase AFG2; regulates OSH1 membrane association. AFG2 is required for membrane dissociation of OSH1. Interacts with SCS2.

It is found in the golgi apparatus membrane. It localises to the nucleus outer membrane. The protein localises to the endoplasmic reticulum membrane. The protein resides in the vacuole membrane. In terms of biological role, lipid transport protein (LTP) involved in non-vesicular transfer of lipids between membranes. Functions in phosphoinositide-coupled directional transport of various lipids by carrying the lipid molecule in a hydrophobic pocket and transferring it between membranes through the cytosol. Involved in maintenance of intracellular sterol distribution and homeostasis. Involved in non-vesicular transport of ergosterol and PI(4)P at the NVJ. Binds sterol and PI4P in a mutually exclusive manner. May be involved in formation of PMN vesicles by altering the membrane lipid composition. This is Oxysterol-binding protein homolog 1 from Saccharomyces cerevisiae (strain ATCC 204508 / S288c) (Baker's yeast).